We begin with the raw amino-acid sequence, 1197 residues long: DNA-directed RNA polymerase subunit beta (1197 aa).

The span at 581–597 shows a compositional bias: polar residues; that stretch reads QANSPLNDDGSFTNPTV. Disordered stretches follow at residues 581 to 603 and 1172 to 1197; these read QANSPLNDDGSFTNPTVTARHGD and EKPDLFKGDDDDTPRIPATKLDEENV.

It belongs to the RNA polymerase beta chain family. As to quaternary structure, the RNAP catalytic core consists of 2 alpha, 1 beta, 1 beta' and 1 omega subunit. When a sigma factor is associated with the core the holoenzyme is formed, which can initiate transcription.

It carries out the reaction RNA(n) + a ribonucleoside 5'-triphosphate = RNA(n+1) + diphosphate. DNA-dependent RNA polymerase catalyzes the transcription of DNA into RNA using the four ribonucleoside triphosphates as substrates. The polypeptide is DNA-directed RNA polymerase subunit beta (Oenococcus oeni (strain ATCC BAA-331 / PSU-1)).